The following is a 53-amino-acid chain: uncharacterized protein (53 aa).

The protein localises to the mitochondrion. This is an uncharacterized protein from Saccharomyces cerevisiae (strain ATCC 204508 / S288c) (Baker's yeast).